Here is a 2009-residue protein sequence, read N- to C-terminus: Sodium channel protein type 1 subunit alpha (2009 aa).

Topologically, residues 1-128 are cytoplasmic; that stretch reads MEQTVLVPPG…KIAIKILVHS (128 aa). Residues 28–48 show a composition bias toward basic and acidic residues; that stretch reads RIAEEKAKNPKPDKKDDDENG. A disordered region spans residues 28 to 60; the sequence is RIAEEKAKNPKPDKKDDDENGPKPNSDLEAGKN. Residues 110 to 454 form an I repeat; sequence ILTPFNPLRK…QQMIEQLKKQ (345 aa). A helical transmembrane segment spans residues 129–146; sequence LFSMLIMCTILTNCVFMT. Residues 147–152 lie on the Extracellular side of the membrane; sequence MSNPPD. A helical membrane pass occupies residues 153 to 177; sequence WTKNVEYTFTGIYTFESLIKIIARG. Residues 178–188 lie on the Cytoplasmic side of the membrane; that stretch reads FCLEDFTFLRD. Residues 189–205 traverse the membrane as a helical segment; sequence PWNWLDFTVITFAYVTE. At 206 to 213 the chain is on the extracellular side; that stretch reads FVDLGNVS. Asn-211 carries an N-linked (GlcNAc...) asparagine glycan. Residues 214-235 traverse the membrane as a helical segment; it reads ALRTFRVLRALKTISVIPGLKT. Over 236-245 the chain is Cytoplasmic; sequence IVGALIQSVK. Residues 246-269 form a helical membrane-spanning segment; sequence KLSDVMILTVFCLSVFALIGLQLF. Over 270–369 the chain is Extracellular; it reads MGNLRNKCIQ…YGYTSFDTFS (100 aa). 2 disulfide bridges follow: Cys-277–Cys-345 and Cys-336–Cys-351. 5 N-linked (GlcNAc...) asparagine glycosylation sites follow: Asn-284, Asn-295, Asn-301, Asn-306, and Asn-338. Positions 370 to 384 form an intramembrane region, pore-forming; sequence WAFLSLFRLMTQDFW. The Extracellular portion of the chain corresponds to 385-397; the sequence is ENLYQLTLRAAGK. Residues 398–423 form a helical membrane-spanning segment; that stretch reads TYMIFFVLVIFLGSFYLINLILAVVA. Residues 424–768 lie on the Cytoplasmic side of the membrane; that stretch reads MAYEEQNQAT…HVVNLVVMDP (345 aa). Residues 455-529 form a disordered region; that stretch reads QEAAQQAATA…FQKSESEDSI (75 aa). The segment covering 456 to 466 has biased composition (low complexity); sequence EAAQQAATATA. Position 470 is a phosphoserine (Ser-470). Positions 479-492 are enriched in low complexity; the sequence is LSDSSSEASKLSSK. Residues 495–506 show a composition bias toward basic residues; it reads KERRNRRKKRKQ. Residues 520-529 are compositionally biased toward basic and acidic residues; the sequence is FQKSESEDSI. Residues Ser-523, Ser-525, Ser-550, Ser-551, Ser-607, and Ser-730 each carry the phosphoserine modification. The segment at 584–627 is disordered; that stretch reads VGSENDFADDEHSTFEDNESRRDSLFVPRRHGERRNSNLSQTSR. Positions 593-607 are enriched in basic and acidic residues; sequence DEHSTFEDNESRRDS. Residues 750 to 1022 form an II repeat; the sequence is CSPYWLKVKH…QIAVDRMHKG (273 aa). Residues 769 to 787 traverse the membrane as a helical segment; it reads FVDLAITICIVLNTLFMAM. The Extracellular segment spans residues 788 to 797; it reads EHYPMTDHFN. A helical transmembrane segment spans residues 798-820; the sequence is NVLTVGNLVFTGIFTAEMFLKII. Residues 821 to 830 lie on the Cytoplasmic side of the membrane; sequence AMDPYYYFQE. A helical transmembrane segment spans residues 831–849; sequence GWNIFDGFIVTLSLVELGL. Topologically, residues 850-854 are extracellular; sequence ANVEG. The chain crosses the membrane as a helical span at residues 855-874; it reads LSVLRSFRLLRVFKLAKSWP. Over 875–891 the chain is Cytoplasmic; the sequence is TLNMLIKIIGNSVGALG. A helical membrane pass occupies residues 892–912; the sequence is NLTLVLAIIVFIFAVVGMQLF. At 913–938 the chain is on the extracellular side; that stretch reads GKSYKDCVCKIASDCQLPRWHMNDFF. A disulfide bond links Cys-921 and Cys-927. An intramembrane region (pore-forming) is located at residues 939-952; it reads HSFLIVFRVLCGEW. Topologically, residues 953-965 are extracellular; it reads IETMWDCMEVAGQ. A disulfide bridge connects residues Cys-959 and Cys-968. A helical transmembrane segment spans residues 966–992; sequence AMCLTVFMMVMVIGNLVVLNLFLALLL. The Cytoplasmic portion of the chain corresponds to 993–1218; it reads SSFSADNLAA…RTCFRIVEHN (226 aa). The tract at residues 1129–1163 is disordered; that stretch reads TEDFSSESDLEESKEKLNESSSSSEGSTVDIGAPV. An III repeat occupies 1200–1514; it reads RGKQWWNLRR…KKYYNAMKKL (315 aa). The helical transmembrane segment at 1219-1237 threads the bilayer; it reads WFETFIVFMILLSSGALAF. Residues 1238 to 1250 lie on the Extracellular side of the membrane; sequence EDIYIDQRKTIKT. The helical transmembrane segment at 1251–1276 threads the bilayer; the sequence is MLEYADKVFTYIFILEMLLKWVAYGY. Over 1277–1278 the chain is Cytoplasmic; sequence QT. A helical transmembrane segment spans residues 1279–1304; sequence YFTNAWCWLDFLIVDVSLVSLTANAL. The Extracellular portion of the chain corresponds to 1305–1313; it reads GYSELGAIK. The helical transmembrane segment at 1314 to 1332 threads the bilayer; the sequence is SLRTLRALRPLRALSRFEG. At 1333 to 1345 the chain is on the cytoplasmic side; the sequence is MRVVVNALLGAIP. Residues 1346 to 1369 traverse the membrane as a helical segment; the sequence is SIMNVLLVCLIFWLIFSIMGVNLF. Topologically, residues 1370-1415 are extracellular; sequence AGKFYHCINTTTGDRFDIEDVNNHTDCLKLIERNETARWKNVKVNF. Cys-1376 and Cys-1396 are disulfide-bonded. N-linked (GlcNAc...) asparagine glycosylation is found at Asn-1378, Asn-1392, and Asn-1403. Positions 1416–1433 form an intramembrane region, pore-forming; the sequence is DNVGFGYLSLLQVATFKG. The Extracellular portion of the chain corresponds to 1434-1457; the sequence is WMDIMYAAVDSRNVELQPKYEESL. A helical transmembrane segment spans residues 1458–1483; the sequence is YMYLYFVIFIIFGSFFTLNLFIGVII. Residues 1484–1541 lie on the Cytoplasmic side of the membrane; it reads DNFNQQKKKFGGQDIFMTEEQKKYYNAMKKLGSKKPQKPIPRPGNKFQGMVFDFVTRQ. Ser-1516 bears the Phosphoserine; by PKC mark. One copy of the IV repeat lies at 1523–1821; it reads IPRPGNKFQG…WEKFDPDATQ (299 aa). A helical transmembrane segment spans residues 1542 to 1560; the sequence is VFDISIMILICLNMVTMMV. Over 1561 to 1571 the chain is Extracellular; it reads ETDDQSEYVTT. Positions 1561-1571 are S1-S2 loop of repeat IV; the sequence is ETDDQSEYVTT. A helical membrane pass occupies residues 1572–1593; sequence ILSRINLVFIVLFTGECVLKLI. The Cytoplasmic portion of the chain corresponds to 1594 to 1601; that stretch reads SLRHYYFT. The chain crosses the membrane as a helical span at residues 1602 to 1623; it reads IGWNIFDFVVVILSIVGMFLAE. The segment at 1619 to 1636 is S3b-S4 loop of repeat IV; it reads MFLAELIEKYFVSPTLFR. Topologically, residues 1624–1636 are extracellular; it reads LIEKYFVSPTLFR. Residues 1637–1655 traverse the membrane as a helical segment; sequence VIRLARIGRILRLIKGAKG. Residues 1656–1665 are Cytoplasmic-facing; sequence IRTLLFALMM. The helical transmembrane segment at 1666-1688 threads the bilayer; it reads SLPALFNIGLLLFLVMFIYAIFG. Topologically, residues 1689-1711 are extracellular; sequence MSNFAYVKREVGIDDMFNFETFG. The pore-forming intramembrane region spans 1712–1726; that stretch reads NSMICLFQITTSAGW. The Extracellular portion of the chain corresponds to 1727 to 1759; sequence DGLLAPILNSKPPDCDPNKVNPGSSVKGDCGNP. Cys-1741 and Cys-1756 are joined by a disulfide. Residues 1760–1788 traverse the membrane as a helical segment; that stretch reads SVGIFFFVSYIIISFLVVVNMYIAVILEN. Over 1789-2009 the chain is Cytoplasmic; sequence FSVATEESAE…EGKDEKAKGK (221 aa). One can recognise an IQ domain in the interval 1915-1944; it reads EEVSAVIIQRAYRRHLLKRTVKQASFTYNK. The segment at 1986–2009 is disordered; sequence YDRVTKPIVEKHEQEGKDEKAKGK. Residues 1988-2009 show a composition bias toward basic and acidic residues; that stretch reads RVTKPIVEKHEQEGKDEKAKGK.

This sequence belongs to the sodium channel (TC 1.A.1.10) family. Nav1.1/SCN1A subfamily. The Nav1.1 voltage-gated sodium channel consists of an ion-conducting alpha subunit SCN1A which is functional on its own regulated by one or more beta-1 (SCN1B), beta-2 (SCN2B), beta-3 (SCN3B) and beta-4 (SCN4B) subunits. SCN1B and SCN3B are non-covalently associated with SCN1A. SCN2B and SCN4B are disulfide-linked to SCN1A. SCN1B regulates both the expression at the plasma membrane and the voltage dependence of Nav1.1 inactivation. SCN3B and SCN4B reduce Nav1.1 conductance. Probably interacts with TMEM233; modulates the gating properties of NaV1.1. Interacts with FGF13; regulates the steady-state inactivation of Nav.1.1. In terms of processing, phosphorylation at Ser-1516 by PKC in a highly conserved cytoplasmic loop slows inactivation of the sodium channel and reduces peak sodium currents.

It localises to the cell membrane. It catalyses the reaction Na(+)(in) = Na(+)(out). Its activity is regulated as follows. Activated by the spider toxins Hm1a and Hm1b (H.maculata, AC P60992 and AC P0DOC5) eliciting acute pain and mechanical allodynia. Inhibited by the conotoxin GVIIJ. Inhibited by the spider beta/delta-theraphotoxin-Pre1a. Its function is as follows. Pore-forming subunit of Nav1.1, a voltage-gated sodium (Nav) channel that directly mediates the depolarizing phase of action potentials in excitable membranes. Navs, also called VGSCs (voltage-gated sodium channels) or VDSCs (voltage-dependent sodium channels), operate by switching between closed and open conformations depending on the voltage difference across the membrane. In the open conformation they allow Na(+) ions to selectively pass through the pore, along their electrochemical gradient. The influx of Na(+) ions provokes membrane depolarization, initiating the propagation of electrical signals throughout cells and tissues. By regulating the excitability of neurons, ensures that they respond appropriately to synaptic inputs, maintaining the balance between excitation and inhibition in brain neural circuits. Nav1.1 plays a role in controlling the excitability and action potential propagation from somatosensory neurons, thereby contributing to the sensory perception of mechanically-induced pain. The chain is Sodium channel protein type 1 subunit alpha from Homo sapiens (Human).